A 684-amino-acid polypeptide reads, in one-letter code: DNA helicase IV (684 aa).

One can recognise a UvrD-like helicase ATP-binding domain in the interval 195 to 505 (SPLNPAQARA…CDLDTTYRFN (311 aa)). Residues 216 to 223 (AGAGSGKT) and arginine 503 each bind ATP.

This sequence belongs to the helicase family. UvrD subfamily.

The catalysed reaction is Couples ATP hydrolysis with the unwinding of duplex DNA by translocating in the 3'-5' direction.. It carries out the reaction ATP + H2O = ADP + phosphate + H(+). Functionally, helicase IV catalyzes the unwinding of duplex DNA in the 3' to 5' direction with respect to the bound single strand in a reaction that is dependent upon the hydrolysis of ATP. This Escherichia coli (strain K12) protein is DNA helicase IV (helD).